Reading from the N-terminus, the 399-residue chain is Coenzyme A biosynthesis bifunctional protein CoaBC (399 aa).

Residues 1-190 form a phosphopantothenoylcysteine decarboxylase region; that stretch reads MQTLAGKKIL…FQPKVLEGKS (190 aa). C159 acts as the Proton donor in catalysis. Residues 191 to 399 form a phosphopantothenate--cysteine ligase region; that stretch reads ILISAGPTRE…KILEKMRELM (209 aa). CTP-binding positions include D279, K289, 307 to 310, F326, K340, and K344; that span reads PDIV.

It in the N-terminal section; belongs to the HFCD (homo-oligomeric flavin containing Cys decarboxylase) superfamily. This sequence in the C-terminal section; belongs to the PPC synthetase family. Mg(2+) is required as a cofactor. FMN serves as cofactor.

The enzyme catalyses N-[(R)-4-phosphopantothenoyl]-L-cysteine + H(+) = (R)-4'-phosphopantetheine + CO2. It catalyses the reaction (R)-4'-phosphopantothenate + L-cysteine + CTP = N-[(R)-4-phosphopantothenoyl]-L-cysteine + CMP + diphosphate + H(+). It functions in the pathway cofactor biosynthesis; coenzyme A biosynthesis; CoA from (R)-pantothenate: step 2/5. The protein operates within cofactor biosynthesis; coenzyme A biosynthesis; CoA from (R)-pantothenate: step 3/5. In terms of biological role, catalyzes two sequential steps in the biosynthesis of coenzyme A. In the first step cysteine is conjugated to 4'-phosphopantothenate to form 4-phosphopantothenoylcysteine. In the second step the latter compound is decarboxylated to form 4'-phosphopantotheine. The polypeptide is Coenzyme A biosynthesis bifunctional protein CoaBC (Vibrio parahaemolyticus serotype O3:K6 (strain RIMD 2210633)).